Here is a 372-residue protein sequence, read N- to C-terminus: Glutamate 5-kinase (372 aa).

Position 14 (K14) interacts with ATP. The substrate site is built by S54, D141, and N153. ATP is bound at residue T173–D174. The 79-residue stretch at R280–S358 folds into the PUA domain.

It belongs to the glutamate 5-kinase family.

It is found in the cytoplasm. The catalysed reaction is L-glutamate + ATP = L-glutamyl 5-phosphate + ADP. Its pathway is amino-acid biosynthesis; L-proline biosynthesis; L-glutamate 5-semialdehyde from L-glutamate: step 1/2. In terms of biological role, catalyzes the transfer of a phosphate group to glutamate to form L-glutamate 5-phosphate. The sequence is that of Glutamate 5-kinase from Methylibium petroleiphilum (strain ATCC BAA-1232 / LMG 22953 / PM1).